Consider the following 261-residue polypeptide: Cytochrome c oxidase subunit 2 (261 aa).

The Mitochondrial intermembrane portion of the chain corresponds to 1–34; it reads MSFTGIFHFFTNSPCDAAEPWQLGSQDAATPMMQ. A helical membrane pass occupies residues 35–55; the sequence is GIIDLHHDIFFFLILILVFVS. Over 56-87 the chain is Mitochondrial matrix; the sequence is RILVRALWHFHSKKNPIPQRIVHGTTIEILRT. A helical transmembrane segment spans residues 88 to 108; that stretch reads IFPSIIPMFIAIPSFALLYSM. The Mitochondrial intermembrane segment spans residues 109–261; sequence DEVVVDPAMT…NQLIPQTGEA (153 aa). Residues His-188, Cys-223, Glu-225, Cys-227, and His-231 each coordinate Cu cation. Glu-225 is a Mg(2+) binding site.

The protein belongs to the cytochrome c oxidase subunit 2 family. As to quaternary structure, component of the cytochrome c oxidase (complex IV, CIV), a multisubunit enzyme composed of a catalytic core of 3 subunits and several supernumerary subunits. The complex exists as a monomer or a dimer and forms supercomplexes (SCs) in the inner mitochondrial membrane with ubiquinol-cytochrome c oxidoreductase (cytochrome b-c1 complex, complex III, CIII). Cu cation serves as cofactor.

The protein localises to the mitochondrion inner membrane. It catalyses the reaction 4 Fe(II)-[cytochrome c] + O2 + 8 H(+)(in) = 4 Fe(III)-[cytochrome c] + 2 H2O + 4 H(+)(out). In terms of biological role, component of the cytochrome c oxidase, the last enzyme in the mitochondrial electron transport chain which drives oxidative phosphorylation. The respiratory chain contains 3 multisubunit complexes succinate dehydrogenase (complex II, CII), ubiquinol-cytochrome c oxidoreductase (cytochrome b-c1 complex, complex III, CIII) and cytochrome c oxidase (complex IV, CIV), that cooperate to transfer electrons derived from NADH and succinate to molecular oxygen, creating an electrochemical gradient over the inner membrane that drives transmembrane transport and the ATP synthase. Cytochrome c oxidase is the component of the respiratory chain that catalyzes the reduction of oxygen to water. Electrons originating from reduced cytochrome c in the intermembrane space (IMS) are transferred via the dinuclear copper A center (CU(A)) of subunit 2 and heme A of subunit 1 to the active site in subunit 1, a binuclear center (BNC) formed by heme A3 and copper B (CU(B)). The BNC reduces molecular oxygen to 2 water molecules using 4 electrons from cytochrome c in the IMS and 4 protons from the mitochondrial matrix. The chain is Cytochrome c oxidase subunit 2 (COX2) from Daucus carota (Wild carrot).